The sequence spans 218 residues: Pyridoxine/pyridoxamine 5'-phosphate oxidase (218 aa).

Residues 14–17 (RREY) and Lys72 each bind substrate. FMN-binding positions include 67 to 72 (RIVLLK), 82 to 83 (YT), Arg88, Lys89, and Gln111. Residues Tyr129, Arg133, and Ser137 each coordinate substrate. FMN-binding positions include 146 to 147 (QS) and Trp191. 197-199 (RLH) provides a ligand contact to substrate. Arg201 is a binding site for FMN.

Belongs to the pyridoxamine 5'-phosphate oxidase family. As to quaternary structure, homodimer. The cofactor is FMN.

The enzyme catalyses pyridoxamine 5'-phosphate + O2 + H2O = pyridoxal 5'-phosphate + H2O2 + NH4(+). It catalyses the reaction pyridoxine 5'-phosphate + O2 = pyridoxal 5'-phosphate + H2O2. It participates in cofactor metabolism; pyridoxal 5'-phosphate salvage; pyridoxal 5'-phosphate from pyridoxamine 5'-phosphate: step 1/1. The protein operates within cofactor metabolism; pyridoxal 5'-phosphate salvage; pyridoxal 5'-phosphate from pyridoxine 5'-phosphate: step 1/1. Catalyzes the oxidation of either pyridoxine 5'-phosphate (PNP) or pyridoxamine 5'-phosphate (PMP) into pyridoxal 5'-phosphate (PLP). In Citrobacter koseri (strain ATCC BAA-895 / CDC 4225-83 / SGSC4696), this protein is Pyridoxine/pyridoxamine 5'-phosphate oxidase.